Reading from the N-terminus, the 126-residue chain is Large ribosomal subunit protein bL12 (126 aa).

This sequence belongs to the bacterial ribosomal protein bL12 family. Homodimer. Part of the ribosomal stalk of the 50S ribosomal subunit. Forms a multimeric L10(L12)X complex, where L10 forms an elongated spine to which 2 to 4 L12 dimers bind in a sequential fashion. Binds GTP-bound translation factors.

Forms part of the ribosomal stalk which helps the ribosome interact with GTP-bound translation factors. Is thus essential for accurate translation. The chain is Large ribosomal subunit protein bL12 from Nitrosospira multiformis (strain ATCC 25196 / NCIMB 11849 / C 71).